The chain runs to 247 residues: Enolase-phosphatase E1 (247 aa).

The Mg(2+) site is built by Asp-12 and Glu-14. Substrate is bound by residues Ser-141–Ser-142 and Lys-175. Asp-200 is a Mg(2+) binding site.

It belongs to the HAD-like hydrolase superfamily. MasA/MtnC family. Monomer. It depends on Mg(2+) as a cofactor.

The protein resides in the cytoplasm. It is found in the nucleus. The enzyme catalyses 5-methylsulfanyl-2,3-dioxopentyl phosphate + H2O = 1,2-dihydroxy-5-(methylsulfanyl)pent-1-en-3-one + phosphate. The protein operates within amino-acid biosynthesis; L-methionine biosynthesis via salvage pathway; L-methionine from S-methyl-5-thio-alpha-D-ribose 1-phosphate: step 3/6. Its pathway is amino-acid biosynthesis; L-methionine biosynthesis via salvage pathway; L-methionine from S-methyl-5-thio-alpha-D-ribose 1-phosphate: step 4/6. In terms of biological role, bifunctional enzyme that catalyzes the enolization of 2,3-diketo-5-methylthiopentyl-1-phosphate (DK-MTP-1-P) into the intermediate 2-hydroxy-3-keto-5-methylthiopentenyl-1-phosphate (HK-MTPenyl-1-P), which is then dephosphorylated to form the acireductone 1,2-dihydroxy-3-keto-5-methylthiopentene (DHK-MTPene). This chain is Enolase-phosphatase E1, found in Drosophila willistoni (Fruit fly).